We begin with the raw amino-acid sequence, 338 residues long: MKLAVIAGDGIGTEVTAEALKVLHALRDDVETTDYDLGARRYLRNGELLTDEDLDSLREHDAILLGAIGDPRTVPAGVLERGLLLPLRFKLDHAVNLRPSKLYPGSSSPLANPGDIDFVVVREGTEGLYCGNGGTLRAGTDYEVASEVSQNTYYGVERVVRDAFERAQSRRKKLTWVHKTNVLVNAGSLWQRAIETVGQEYPEVQVDYNHIDAATIYMVTKPQEYDVIVTDNLFGDILTDLAGAVTGGIGLAASGNIDPSRKNPSMFEPVHGSAPDIAGQGIADPCAAILSVALMLRHLGDDANAERIEAAVLAEAGSRDGGPVKTAEVGDRVVANLK.

Substrate contacts are provided by Arg-88, Arg-98, Arg-122, and Asp-212. Mg(2+)-binding residues include Asp-212, Asp-236, and Asp-240. Position 272-284 (272-284 (GSAPDIAGQGIAD)) interacts with NAD(+).

This sequence belongs to the isocitrate and isopropylmalate dehydrogenases family. LeuB type 2 subfamily. Homodimer. The cofactor is Mg(2+). Requires Mn(2+) as cofactor.

It localises to the cytoplasm. It carries out the reaction (2R,3S)-3-isopropylmalate + NAD(+) = 4-methyl-2-oxopentanoate + CO2 + NADH. The protein operates within amino-acid biosynthesis; L-leucine biosynthesis; L-leucine from 3-methyl-2-oxobutanoate: step 3/4. Functionally, catalyzes the oxidation of 3-carboxy-2-hydroxy-4-methylpentanoate (3-isopropylmalate) to 3-carboxy-4-methyl-2-oxopentanoate. The product decarboxylates to 4-methyl-2 oxopentanoate. In Corynebacterium jeikeium (strain K411), this protein is 3-isopropylmalate dehydrogenase.